The chain runs to 462 residues: MFILIIKCGIMEKEVISSREFIDRFVECLEKGEDFKLKDCVVEGNVDILNIYEMIKDKELKGGYIEKKDDEIVVNINIKVDIYNVEFNGDFRFFVNMEYQIVISVFNGNAYFRVITFKGSVYFIRTIFNGDVDFIDTIFEENAYFSVTAFKGNIINFSGTIFNKESHFKSTTFEGNTYFSVTTFNIAEFYNSTFKSHVYFDDISFNLLSFTDCRFRDDVSFKKIDKENFKGLAIFLKTQFLNKHTTIENFQLSKTSFLKTDVREVLLCDVKKEEILSHKILRIKEDSGNKDKDLENKLKELLGLSYKYIIDQFNYKSVLAEYRNLRISIENNRTYIEASNLYKMEMELIKEFSNGRFEKFIIGAYGAISDYGESMEKTGKWILGSMILFTILASILRFKGMEWDIFKIIEFWWISFWEVIRLFLQIGTEDKSLWILEPIIRVTSLILLGNLYIAVRRKLSRK.

A run of 2 helical transmembrane segments spans residues 381–401 (WILG…FKGM) and 433–453 (LWIL…NLYI).

Its subcellular location is the cell membrane. This is an uncharacterized protein from Methanocaldococcus jannaschii (strain ATCC 43067 / DSM 2661 / JAL-1 / JCM 10045 / NBRC 100440) (Methanococcus jannaschii).